Consider the following 91-residue polypeptide: ATP-dependent Clp protease adapter protein ClpS (91 aa).

The protein belongs to the ClpS family. In terms of assembly, binds to the N-terminal domain of the chaperone ClpA.

Involved in the modulation of the specificity of the ClpAP-mediated ATP-dependent protein degradation. The chain is ATP-dependent Clp protease adapter protein ClpS from Synechococcus sp. (strain ATCC 27144 / PCC 6301 / SAUG 1402/1) (Anacystis nidulans).